We begin with the raw amino-acid sequence, 328 residues long: Tetraacyldisaccharide 4'-kinase (328 aa).

59-66 contributes to the ATP binding site; sequence TAGGNGKT.

This sequence belongs to the LpxK family.

The enzyme catalyses a lipid A disaccharide + ATP = a lipid IVA + ADP + H(+). The protein operates within glycolipid biosynthesis; lipid IV(A) biosynthesis; lipid IV(A) from (3R)-3-hydroxytetradecanoyl-[acyl-carrier-protein] and UDP-N-acetyl-alpha-D-glucosamine: step 6/6. Its function is as follows. Transfers the gamma-phosphate of ATP to the 4'-position of a tetraacyldisaccharide 1-phosphate intermediate (termed DS-1-P) to form tetraacyldisaccharide 1,4'-bis-phosphate (lipid IVA). The chain is Tetraacyldisaccharide 4'-kinase from Aliivibrio fischeri (strain MJ11) (Vibrio fischeri).